Reading from the N-terminus, the 329-residue chain is Vacuolar protein sorting-associated protein 26B-like (329 aa).

Belongs to the VPS26 family.

The protein resides in the cytoplasm. The protein localises to the membrane. Functionally, probable component of the retromer complex, a complex required to retrieve lysosomal enzyme receptors (IGF2R and M6PR) from endosomes to the trans-Golgi network. This chain is Vacuolar protein sorting-associated protein 26B-like (vps26bl), found in Danio rerio (Zebrafish).